The primary structure comprises 121 residues: Large ribosomal subunit protein uL14c (121 aa).

This sequence belongs to the universal ribosomal protein uL14 family. In terms of assembly, part of the 50S ribosomal subunit.

The protein localises to the plastid. The protein resides in the chloroplast. Binds to 23S rRNA. The chain is Large ribosomal subunit protein uL14c from Thalassiosira pseudonana (Marine diatom).